A 331-amino-acid polypeptide reads, in one-letter code: PIN2/TERF1-interacting telomerase inhibitor 1 (331 aa).

Disordered regions lie at residues 1–28 (MSML…DDSK), 156–175 (AQDG…LTTT), and 197–331 (SKSQ…KVSR). Residues 26–72 (DSKFGQKMLEKMGWSKGKGLGAQEQGATEHIKVKVKNNHLGLGATNN) form the G-patch domain. Position 233 is a phosphoserine (serine 233). A compositionally biased stretch (basic residues) spans 236-246 (HKAKRHKKKKR). A compositionally biased stretch (basic and acidic residues) spans 247–261 (VEAERGPAAKKRDQV). Residues 254 to 328 (AAKKRDQVEL…DSAPVKKKKK (75 aa)) are telomerase inhibitory domain (TID). 3 positions are modified to phosphoserine: serine 269, serine 274, and serine 277. A TBM motif is present at residues 291–301 (QDDVPKPRKRR). The span at 297-306 (PRKRRAKKTL) shows a compositional bias: basic residues.

It belongs to the PINX1 family. In terms of assembly, interacts with MCRS1, TERT, TERF1, NCL/nucleolin, and the telomerase RNA.

Its subcellular location is the nucleus. The protein localises to the nucleolus. It is found in the chromosome. It localises to the telomere. The protein resides in the centromere. Its subcellular location is the kinetochore. Functionally, microtubule-binding protein essential for faithful chromosome segregation. Mediates TRF1 and TERT accumulation in nucleolus and enhances TRF1 binding to telomeres. Inhibits telomerase activity. May inhibit cell proliferation and act as tumor suppressor. This is PIN2/TERF1-interacting telomerase inhibitor 1 from Rattus norvegicus (Rat).